We begin with the raw amino-acid sequence, 488 residues long: Bifunctional protein HldE (488 aa).

The interval 1-330 is ribokinase; that stretch reads MDRKSIESIF…NAVALAHSDS (330 aa). 205-208 contacts ATP; sequence NRRE. Asp275 is an active-site residue. Residues 356 to 488 are cytidylyltransferase; that stretch reads FTNGCFDLLH…IIERVLERYS (133 aa).

The protein in the N-terminal section; belongs to the carbohydrate kinase PfkB family. In the C-terminal section; belongs to the cytidylyltransferase family. In terms of assembly, homodimer.

It carries out the reaction D-glycero-beta-D-manno-heptose 7-phosphate + ATP = D-glycero-beta-D-manno-heptose 1,7-bisphosphate + ADP + H(+). It catalyses the reaction D-glycero-beta-D-manno-heptose 1-phosphate + ATP + H(+) = ADP-D-glycero-beta-D-manno-heptose + diphosphate. Its pathway is nucleotide-sugar biosynthesis; ADP-L-glycero-beta-D-manno-heptose biosynthesis; ADP-L-glycero-beta-D-manno-heptose from D-glycero-beta-D-manno-heptose 7-phosphate: step 1/4. It participates in nucleotide-sugar biosynthesis; ADP-L-glycero-beta-D-manno-heptose biosynthesis; ADP-L-glycero-beta-D-manno-heptose from D-glycero-beta-D-manno-heptose 7-phosphate: step 3/4. Functionally, catalyzes the phosphorylation of D-glycero-D-manno-heptose 7-phosphate at the C-1 position to selectively form D-glycero-beta-D-manno-heptose-1,7-bisphosphate. Catalyzes the ADP transfer from ATP to D-glycero-beta-D-manno-heptose 1-phosphate, yielding ADP-D-glycero-beta-D-manno-heptose. The sequence is that of Bifunctional protein HldE from Pelobacter propionicus (strain DSM 2379 / NBRC 103807 / OttBd1).